Reading from the N-terminus, the 351-residue chain is Lipoyl synthase, mitochondrial (351 aa).

7 residues coordinate [4Fe-4S] cluster: Cys84, Cys89, Cys95, Cys115, Cys119, Cys122, and Ser330. One can recognise a Radical SAM core domain in the interval 100–319 (DKSKATATIM…QKRAMDMGFL (220 aa)).

The protein belongs to the radical SAM superfamily. Lipoyl synthase family. [4Fe-4S] cluster is required as a cofactor.

The protein localises to the mitochondrion. It catalyses the reaction [[Fe-S] cluster scaffold protein carrying a second [4Fe-4S](2+) cluster] + N(6)-octanoyl-L-lysyl-[protein] + 2 oxidized [2Fe-2S]-[ferredoxin] + 2 S-adenosyl-L-methionine + 4 H(+) = [[Fe-S] cluster scaffold protein] + N(6)-[(R)-dihydrolipoyl]-L-lysyl-[protein] + 4 Fe(3+) + 2 hydrogen sulfide + 2 5'-deoxyadenosine + 2 L-methionine + 2 reduced [2Fe-2S]-[ferredoxin]. It participates in protein modification; protein lipoylation via endogenous pathway; protein N(6)-(lipoyl)lysine from octanoyl-[acyl-carrier-protein]: step 2/2. Its function is as follows. Catalyzes the radical-mediated insertion of two sulfur atoms into the C-6 and C-8 positions of the octanoyl moiety bound to the lipoyl domains of lipoate-dependent enzymes, thereby converting the octanoylated domains into lipoylated derivatives. In Yarrowia lipolytica (strain CLIB 122 / E 150) (Yeast), this protein is Lipoyl synthase, mitochondrial.